The sequence spans 235 residues: Phosphoribosylaminoimidazole-succinocarboxamide synthase (235 aa).

Belongs to the SAICAR synthetase family.

It carries out the reaction 5-amino-1-(5-phospho-D-ribosyl)imidazole-4-carboxylate + L-aspartate + ATP = (2S)-2-[5-amino-1-(5-phospho-beta-D-ribosyl)imidazole-4-carboxamido]succinate + ADP + phosphate + 2 H(+). It functions in the pathway purine metabolism; IMP biosynthesis via de novo pathway; 5-amino-1-(5-phospho-D-ribosyl)imidazole-4-carboxamide from 5-amino-1-(5-phospho-D-ribosyl)imidazole-4-carboxylate: step 1/2. The sequence is that of Phosphoribosylaminoimidazole-succinocarboxamide synthase from Clostridium acetobutylicum (strain ATCC 824 / DSM 792 / JCM 1419 / IAM 19013 / LMG 5710 / NBRC 13948 / NRRL B-527 / VKM B-1787 / 2291 / W).